Reading from the N-terminus, the 336-residue chain is Aspartate carbamoyltransferase catalytic subunit (336 aa).

Positions 71 and 72 each coordinate carbamoyl phosphate. Lys99 lines the L-aspartate pocket. The carbamoyl phosphate site is built by Arg121, His151, and Gln154. L-aspartate contacts are provided by Arg184 and Arg239. Carbamoyl phosphate is bound by residues Gly280 and Pro281.

This sequence belongs to the aspartate/ornithine carbamoyltransferase superfamily. ATCase family. In terms of assembly, heterododecamer (2C3:3R2) of six catalytic PyrB chains organized as two trimers (C3), and six regulatory PyrI chains organized as three dimers (R2).

It catalyses the reaction carbamoyl phosphate + L-aspartate = N-carbamoyl-L-aspartate + phosphate + H(+). The protein operates within pyrimidine metabolism; UMP biosynthesis via de novo pathway; (S)-dihydroorotate from bicarbonate: step 2/3. In terms of biological role, catalyzes the condensation of carbamoyl phosphate and aspartate to form carbamoyl aspartate and inorganic phosphate, the committed step in the de novo pyrimidine nucleotide biosynthesis pathway. In Azotobacter vinelandii (strain DJ / ATCC BAA-1303), this protein is Aspartate carbamoyltransferase catalytic subunit.